Here is a 485-residue protein sequence, read N- to C-terminus: Arginine biosynthesis bifunctional protein ArgJ, mitochondrial (485 aa).

Residues threonine 185, lysine 214, threonine 225, and glutamate 315 each coordinate substrate. Residue threonine 225 is the Nucleophile of the active site.

This sequence belongs to the ArgJ family. Heterodimer of an alpha and a beta chain. In terms of processing, the alpha and beta chains are autoproteolytically processed from a single precursor protein within the mitochondrion.

The protein resides in the mitochondrion matrix. It catalyses the reaction N(2)-acetyl-L-ornithine + L-glutamate = N-acetyl-L-glutamate + L-ornithine. It carries out the reaction L-glutamate + acetyl-CoA = N-acetyl-L-glutamate + CoA + H(+). It functions in the pathway amino-acid biosynthesis; L-arginine biosynthesis; L-ornithine and N-acetyl-L-glutamate from L-glutamate and N(2)-acetyl-L-ornithine (cyclic): step 1/1. Its pathway is amino-acid biosynthesis; L-arginine biosynthesis; N(2)-acetyl-L-ornithine from L-glutamate: step 1/4. Catalyzes two activities which are involved in the cyclic version of arginine biosynthesis: the synthesis of acetylglutamate from glutamate and acetyl-CoA, and of ornithine by transacetylation between acetylornithine and glutamate. The protein is Arginine biosynthesis bifunctional protein ArgJ, mitochondrial of Penicillium rubens (strain ATCC 28089 / DSM 1075 / NRRL 1951 / Wisconsin 54-1255) (Penicillium chrysogenum).